The following is an 843-amino-acid chain: Respiratory burst oxidase homolog protein B (843 aa).

The span at 1–10 (MREEEMESSS) shows a compositional bias: acidic residues. The interval 1–27 (MREEEMESSSEGETNKISRCKATGSDN) is disordered. Residues 1–297 (MREEEMESSS…SYFFLENWKR (297 aa)) lie on the Cytoplasmic side of the membrane. 2 EF-hand-like regions span residues 114-122 (AVEGKLPKS) and 148-159 (RGTTSSSITKTE). EF-hand domains are found at residues 171–206 (SFDD…SASA) and 215–250 (NVDE…VPSQ). Positions 184, 186, 188, 190, and 195 each coordinate Ca(2+). Phosphoserine is present on serine 268. Residues 298–318 (IWVLTLWISICITLFTWKFLQ) form a helical membrane-spanning segment. The Extracellular portion of the chain corresponds to 319–383 (YKRKTVFEVM…FDDNINFHKV (65 aa)). The Ferric oxidoreductase domain occupies 336-495 (KGSAETLKFN…LFVIVYVLLI (160 aa)). Residues 384-404 (VAFGIAVGIGLHAISHLACDF) traverse the membrane as a helical segment. The Cytoplasmic portion of the chain corresponds to 405 to 439 (PRLLHAKNVEFEPMKKFFGDERPENYGWFMKGTDG). A helical membrane pass occupies residues 440-460 (WTGVTMVVLMLVAYVLAQSWF). The Extracellular segment spans residues 461–482 (RRNRANLPKSLKRLTGFNAFWY). A helical membrane pass occupies residues 483–503 (SHHLFVIVYVLLIVHGYFVYL). Residues 504–511 (SKEWYHKT) lie on the Cytoplasmic side of the membrane. Residues 512–529 (TWMYLAVPVLLYAFERLI) traverse the membrane as a helical segment. Over 530 to 659 (RAFRPGAKAV…PYGAPAQDYR (130 aa)) the chain is Extracellular. Residues 534-657 (PGAKAVKVLK…DGPYGAPAQD (124 aa)) enclose the FAD-binding FR-type domain. Residues 660 to 680 (NYDVLLLVGLGIGATPLISII) traverse the membrane as a helical segment. At 681-843 (RDVLNNIKNQ…TKFEFHKENF (163 aa)) the chain is on the cytoplasmic side.

This sequence belongs to the RBOH (TC 5.B.1.3) family. As to quaternary structure, monomer and homodimer.

The protein resides in the membrane. Its function is as follows. Calcium-dependent NADPH oxidase that generates superoxide. The protein is Respiratory burst oxidase homolog protein B (RBOHB) of Arabidopsis thaliana (Mouse-ear cress).